A 481-amino-acid polypeptide reads, in one-letter code: Glutamyl-tRNA(Gln) amidotransferase subunit A (481 aa).

Residues lysine 78 and serine 153 each act as charge relay system in the active site. Serine 177 functions as the Acyl-ester intermediate in the catalytic mechanism.

This sequence belongs to the amidase family. GatA subfamily. In terms of assembly, heterotrimer of A, B and C subunits.

The catalysed reaction is L-glutamyl-tRNA(Gln) + L-glutamine + ATP + H2O = L-glutaminyl-tRNA(Gln) + L-glutamate + ADP + phosphate + H(+). Allows the formation of correctly charged Gln-tRNA(Gln) through the transamidation of misacylated Glu-tRNA(Gln) in organisms which lack glutaminyl-tRNA synthetase. The reaction takes place in the presence of glutamine and ATP through an activated gamma-phospho-Glu-tRNA(Gln). The polypeptide is Glutamyl-tRNA(Gln) amidotransferase subunit A (Borreliella afzelii (strain PKo) (Borrelia afzelii)).